The following is an 824-amino-acid chain: Probable receptor-like protein kinase At5g24010 (824 aa).

Positions 1-24 (MAFPINLTQTLLFFFCPLLHLSFA) are cleaved as a signal peptide. N6, N41, N204, N227, and N291 each carry an N-linked (GlcNAc...) asparagine glycan. The Extracellular portion of the chain corresponds to 25-406 (AFTPTDNYLI…SSEVVSGKRN (382 aa)). A helical transmembrane segment spans residues 407 to 427 (VVWIVVGSVLGGFVFLSLFFL). The Cytoplasmic portion of the chain corresponds to 428-824 (SVLCLCRRKN…FSQLMTNAGR (397 aa)). The segment at 440 to 467 (TRSSESTGWTPLRRFRGSSNSRTTERTV) is disordered. Polar residues predominate over residues 456-467 (GSSNSRTTERTV). The region spanning 489-764 (FDRSLVIGVG…VLWNLEHVLQ (276 aa)) is the Protein kinase domain. ATP-binding positions include 495 to 503 (IGVGGFGMV) and K517. The active-site Proton acceptor is D613. Residues 777–803 (DYGDVTDPRTARQGLSNGSNIERDYGD) are disordered.

This sequence belongs to the protein kinase superfamily. Ser/Thr protein kinase family.

It is found in the membrane. The protein is Probable receptor-like protein kinase At5g24010 of Arabidopsis thaliana (Mouse-ear cress).